A 332-amino-acid chain; its full sequence is RNA polymerase principal sigma factor HrdD (332 aa).

A disordered region spans residues M1–A25. Over residues Q10–S22 the composition is skewed to polar residues. Positions D124–V137 match the Polymerase core binding motif. Positions L294 to K313 form a DNA-binding region, H-T-H motif.

The protein belongs to the sigma-70 factor family.

Functionally, sigma factors are initiation factors that promote the attachment of RNA polymerase to specific initiation sites and are then released. The protein is RNA polymerase principal sigma factor HrdD (hrdD) of Streptomyces viridifaciens.